We begin with the raw amino-acid sequence, 910 residues long: Eukaryotic translation initiation factor 3 subunit C (910 aa).

Positions 1 to 21 (MSRFFANGSESESESSEEEIQ) are disordered. The span at 11-20 (SESESSEEEI) shows a compositional bias: acidic residues. 4 positions are modified to phosphoserine: Ser34, Ser165, Ser176, and Ser185. A disordered region spans residues 157 to 279 (FREAPDQESE…IRKRAEDDED (123 aa)). Positions 162–186 (DQESEAEDEVVALESDGGDAGDDSD) are enriched in acidic residues. Positions 194–207 (AVPKAVKSAPAKAA) are enriched in low complexity. Residues 209 to 235 (ADDDDSDDSIDWDSDSESETESSDDEN) are compositionally biased toward acidic residues. Basic and acidic residues predominate over residues 240 to 268 (MRERFLKRTTEKEEKDDDKRKDKRKEQKT). One can recognise a PCI domain in the interval 639–815 (FHMHINLELL…ETVGMHRSEP (177 aa)). Residues 847-910 (FFQRGNMGNR…QQQVQTIDEE (64 aa)) are disordered. Residues 862-874 (NRNQNNQGGNWLG) show a composition bias toward low complexity. A compositionally biased stretch (basic residues) spans 882-891 (RNRNQRGHHK). The segment covering 895–910 (DRQQQQQQQVQTIDEE) has biased composition (low complexity).

Belongs to the eIF-3 subunit C family. In terms of assembly, component of the eukaryotic translation initiation factor 3 (eIF-3) complex. The eIF-3 complex interacts with pix.

Its subcellular location is the cytoplasm. In terms of biological role, component of the eukaryotic translation initiation factor 3 (eIF-3) complex, which is involved in protein synthesis of a specialized repertoire of mRNAs and, together with other initiation factors, stimulates binding of mRNA and methionyl-tRNAi to the 40S ribosome. The eIF-3 complex specifically targets and initiates translation of a subset of mRNAs involved in cell proliferation. The polypeptide is Eukaryotic translation initiation factor 3 subunit C (Drosophila melanogaster (Fruit fly)).